Here is an 82-residue protein sequence, read N- to C-terminus: Large ribosomal subunit protein uL29 (82 aa).

Belongs to the universal ribosomal protein uL29 family.

The protein is Large ribosomal subunit protein uL29 of Trichodesmium erythraeum (strain IMS101).